We begin with the raw amino-acid sequence, 274 residues long: Dermonecrotic toxin SdSicTox-betaIIB1bii (274 aa).

His5 is an active-site residue. Mg(2+)-binding residues include Glu25 and Asp27. The active-site Nucleophile is His41. 2 disulfides stabilise this stretch: Cys45/Cys51 and Cys47/Cys190. Asp85 contributes to the Mg(2+) binding site.

It belongs to the arthropod phospholipase D family. Class II subfamily. Mg(2+) serves as cofactor. In terms of tissue distribution, expressed by the venom gland.

The protein localises to the secreted. It carries out the reaction an N-(acyl)-sphingosylphosphocholine = an N-(acyl)-sphingosyl-1,3-cyclic phosphate + choline. It catalyses the reaction an N-(acyl)-sphingosylphosphoethanolamine = an N-(acyl)-sphingosyl-1,3-cyclic phosphate + ethanolamine. The enzyme catalyses a 1-acyl-sn-glycero-3-phosphocholine = a 1-acyl-sn-glycero-2,3-cyclic phosphate + choline. The catalysed reaction is a 1-acyl-sn-glycero-3-phosphoethanolamine = a 1-acyl-sn-glycero-2,3-cyclic phosphate + ethanolamine. Dermonecrotic toxins cleave the phosphodiester linkage between the phosphate and headgroup of certain phospholipids (sphingolipid and lysolipid substrates), forming an alcohol (often choline) and a cyclic phosphate. This toxin acts on sphingomyelin (SM). It may also act on ceramide phosphoethanolamine (CPE), lysophosphatidylcholine (LPC) and lysophosphatidylethanolamine (LPE), but not on lysophosphatidylserine (LPS), and lysophosphatidylglycerol (LPG). It acts by transphosphatidylation, releasing exclusively cyclic phosphate products as second products. Induces dermonecrosis, hemolysis, increased vascular permeability, edema, inflammatory response, and platelet aggregation. The sequence is that of Dermonecrotic toxin SdSicTox-betaIIB1bii from Sicarius cf. damarensis (strain GJB-2008) (Six-eyed sand spider).